The following is a 62-amino-acid chain: Large ribosomal subunit protein eL24 (62 aa).

4 residues coordinate Zn(2+): Cys-6, Cys-9, Cys-32, and Cys-36. The segment at 6 to 36 adopts a C4-type zinc-finger fold; that stretch reads CSFCEGTIEPGCGKKYVKKDGSVMHFCSSKC.

It belongs to the eukaryotic ribosomal protein eL24 family. Part of the 50S ribosomal subunit. Forms a cluster with proteins L3 and L14. It depends on Zn(2+) as a cofactor.

Functionally, binds to the 23S rRNA. In Methanococcus maripaludis (strain C5 / ATCC BAA-1333), this protein is Large ribosomal subunit protein eL24.